Consider the following 313-residue polypeptide: Putative S-adenosyl-L-methionine-dependent methyltransferase MAV_5150 (313 aa).

S-adenosyl-L-methionine contacts are provided by residues Asp-139 and 168–169; that span reads DL.

Belongs to the UPF0677 family.

Functionally, exhibits S-adenosyl-L-methionine-dependent methyltransferase activity. The chain is Putative S-adenosyl-L-methionine-dependent methyltransferase MAV_5150 from Mycobacterium avium (strain 104).